Here is a 354-residue protein sequence, read N- to C-terminus: COP9 signalosome complex subunit 5 (354 aa).

The 138-residue stretch at 56–193 folds into the MPN domain; that stretch reads VLVSSIALVK…IGAFRTYPKD (138 aa). 3 residues coordinate Zn(2+): His-139, His-141, and Asp-152. The short motif at 139–152 is the JAMM motif element; it reads HSHPGYGCWLSGID. The tract at residues 193 to 212 is disordered; the sequence is DYKPPKKATKQNQDQSVPLS.

Belongs to the peptidase M67A family. CSN5 subfamily. As to quaternary structure, component of the COP9 signalosome (CSN) complex.

The protein localises to the cytoplasm. It is found in the nucleus. Its function is as follows. Catalytic Component of the COP9 signalosome (CSN) complex that acts as an regulator of the ubiquitin (Ubl) conjugation pathway by mediating the deneddylation of the cullin subunit of SCF-type E3 ubiquitin-protein ligase complexes. The chain is COP9 signalosome complex subunit 5 (RRI1) from Yarrowia lipolytica (strain CLIB 122 / E 150) (Yeast).